The following is a 181-amino-acid chain: Adenine phosphoribosyltransferase (181 aa).

Belongs to the purine/pyrimidine phosphoribosyltransferase family. As to quaternary structure, homodimer.

The protein localises to the cytoplasm. The catalysed reaction is AMP + diphosphate = 5-phospho-alpha-D-ribose 1-diphosphate + adenine. It functions in the pathway purine metabolism; AMP biosynthesis via salvage pathway; AMP from adenine: step 1/1. Functionally, catalyzes a salvage reaction resulting in the formation of AMP, that is energically less costly than de novo synthesis. This chain is Adenine phosphoribosyltransferase, found in Vibrio parahaemolyticus serotype O3:K6 (strain RIMD 2210633).